Here is a 130-residue protein sequence, read N- to C-terminus: Serum amyloid A-4 protein (130 aa).

Positions 1–18 are cleaved as a signal peptide; sequence MRLATVIVLCSLFLGVSG. Positions 109–130 are disordered; sequence EEWGRSGKNPNHFRPEGLPEKF. Residues 121–130 show a composition bias toward basic and acidic residues; that stretch reads FRPEGLPEKF.

It belongs to the SAA family. As to quaternary structure, apolipoprotein of the HDL complex. Expressed by the liver; secreted in plasma.

It localises to the secreted. Major acute phase reactant. The sequence is that of Serum amyloid A-4 protein from Mus musculus (Mouse).